The primary structure comprises 117 residues: Large ribosomal subunit protein uL18 (117 aa).

Belongs to the universal ribosomal protein uL18 family. In terms of assembly, part of the 50S ribosomal subunit; part of the 5S rRNA/L5/L18/L25 subcomplex. Contacts the 5S and 23S rRNAs.

Its function is as follows. This is one of the proteins that bind and probably mediate the attachment of the 5S RNA into the large ribosomal subunit, where it forms part of the central protuberance. This chain is Large ribosomal subunit protein uL18, found in Vibrio proteolyticus (Aeromonas proteolytica).